A 368-amino-acid chain; its full sequence is 4-hydroxy-3-methylbut-2-en-1-yl diphosphate synthase (flavodoxin) (368 aa).

Cys-268, Cys-271, Cys-303, and Glu-310 together coordinate [4Fe-4S] cluster.

It belongs to the IspG family. It depends on [4Fe-4S] cluster as a cofactor.

It catalyses the reaction (2E)-4-hydroxy-3-methylbut-2-enyl diphosphate + oxidized [flavodoxin] + H2O + 2 H(+) = 2-C-methyl-D-erythritol 2,4-cyclic diphosphate + reduced [flavodoxin]. It participates in isoprenoid biosynthesis; isopentenyl diphosphate biosynthesis via DXP pathway; isopentenyl diphosphate from 1-deoxy-D-xylulose 5-phosphate: step 5/6. Functionally, converts 2C-methyl-D-erythritol 2,4-cyclodiphosphate (ME-2,4cPP) into 1-hydroxy-2-methyl-2-(E)-butenyl 4-diphosphate. This chain is 4-hydroxy-3-methylbut-2-en-1-yl diphosphate synthase (flavodoxin), found in Listeria monocytogenes serovar 1/2a (strain ATCC BAA-679 / EGD-e).